A 528-amino-acid chain; its full sequence is GMP synthase [glutamine-hydrolyzing] (528 aa).

One can recognise a Glutamine amidotransferase type-1 domain in the interval 13–203; it reads TVLVVDFGAQ…LYEAAGCRPT (191 aa). Cysteine 90 functions as the Nucleophile in the catalytic mechanism. Residues histidine 177 and glutamate 179 contribute to the active site. In terms of domain architecture, GMPS ATP-PPase spans 204-402; it reads WTMVNIVEDQ…LGLPAEMVWR (199 aa). Residue 231-237 participates in ATP binding; that stretch reads SGGVDSA.

As to quaternary structure, homodimer.

The catalysed reaction is XMP + L-glutamine + ATP + H2O = GMP + L-glutamate + AMP + diphosphate + 2 H(+). Its pathway is purine metabolism; GMP biosynthesis; GMP from XMP (L-Gln route): step 1/1. Catalyzes the synthesis of GMP from XMP. In Thermobifida fusca (strain YX), this protein is GMP synthase [glutamine-hydrolyzing].